The chain runs to 173 residues: Avenin-like a5 (173 aa).

Residues 1-19 form the signal peptide; it reads MKTMLILALIALAATSVVA.

This sequence belongs to the prolamin family. In terms of processing, contains 7 disulfide bonds.

Functionally, seed storage protein. Not integrated in the gluten polymer through disulfide bonds, unless incorporated by reduction and reoxidation during dough making. Increases dough strength and bread volume, but decreases dough stability when added into a base wheat flour. The polypeptide is Avenin-like a5 (Triticum aestivum (Wheat)).